The chain runs to 335 residues: ATP-dependent 6-phosphofructokinase (335 aa).

G11 lines the ATP pocket. 21–25 contacts ADP; that stretch reads RAVVR. ATP is bound by residues 72 to 73 and 102 to 105; these read RY and GDGS. D103 provides a ligand contact to Mg(2+). Residue 125–127 participates in substrate binding; that stretch reads TID. D127 functions as the Proton acceptor in the catalytic mechanism. R154 contributes to the ADP binding site. Substrate-binding positions include R162 and 169 to 171; that span reads MGR. Residues 185-187 and 213-215 each bind ADP; these read GAD and KKH. Residues E222, R244, and 250 to 253 each bind substrate; that span reads HIQR.

Belongs to the phosphofructokinase type A (PFKA) family. ATP-dependent PFK group I subfamily. Prokaryotic clade 'B1' sub-subfamily. As to quaternary structure, homotetramer. The cofactor is Mg(2+).

It localises to the cytoplasm. It catalyses the reaction beta-D-fructose 6-phosphate + ATP = beta-D-fructose 1,6-bisphosphate + ADP + H(+). It participates in carbohydrate degradation; glycolysis; D-glyceraldehyde 3-phosphate and glycerone phosphate from D-glucose: step 3/4. With respect to regulation, allosterically activated by ADP and other diphosphonucleosides, and allosterically inhibited by phosphoenolpyruvate. Functionally, catalyzes the phosphorylation of D-fructose 6-phosphate to fructose 1,6-bisphosphate by ATP, the first committing step of glycolysis. The chain is ATP-dependent 6-phosphofructokinase from Streptococcus pneumoniae (strain ATCC BAA-255 / R6).